Reading from the N-terminus, the 714-residue chain is MGKNEARRSALAPDHGTVVCDPLRRLNRMHATPEESIRIVAAQKKKAQDEYGAASITILEGLEAVRKRPGMYIGSTGERGLHHLIWEVVDNAVDEAMAGYATTVNVVLLEDGGVEVADDGRGIPVATHASGIPTVDVVMTQLHAGGKFDSDAYAISGGLHGVGVSVVNALSTRLEVEIKRDGYEWSQVYEKSEPLGLKQGAPTKKTGSTVRFWADPAVFETTEYDFETVARRLQEMAFLNKGLTINLTDERVTQDEVVDEVVSDVAEAPKSASERAAESTAPHKVKSRTFHYPGGLVDFVKHINRTKNAIHSSIVDFSGKGTGHEVEIAMQWNAGYSESVHTFANTINTHEGGTHEEGFRSALTSVVNKYAKDRKLLKDKDPNLTGDDIREGLAAVISVKVSEPQFEGQTKTKLGNTEVKSFVQKVCNEQLTHWFEANPTDSKVVVNKAVSSAQARIAARKARELVRRKSATDIGGLPGKLADCRSTDPRKSELYVVEGDSAGGSAKSGRDSMFQAILPLRGKIINVEKARIDRVLKNTEVQAIITALGTGIHDEFDIGKLRYHKIVLMADADVDGQHISTLLLTLLFRFMRPLIENGHVFLAQPPLYKLKWQRSDPEFAYSDRERDGLLEAGLKAGKKINKEDGIQRYKGLGEMDAKELWETTMDPSVRVLRQVTLDDAAAADELFSILMGEDVDARRSFITRNAKDVRFLDV.

The region spanning 492–606 (SELYVVEGDS…NGHVFLAQPP (115 aa)) is the Toprim domain. 3 residues coordinate Mg(2+): glutamate 498, aspartate 571, and aspartate 573.

It belongs to the type II topoisomerase GyrB family. As to quaternary structure, heterotetramer, composed of two GyrA and two GyrB chains. In the heterotetramer, GyrA contains the active site tyrosine that forms a transient covalent intermediate with DNA, while GyrB binds cofactors and catalyzes ATP hydrolysis. Requires Mg(2+) as cofactor. The cofactor is Mn(2+). Ca(2+) is required as a cofactor.

It localises to the cytoplasm. It carries out the reaction ATP-dependent breakage, passage and rejoining of double-stranded DNA.. With respect to regulation, DNA supercoiling is inhibited by EDTA, novobiocin, coumermycin and ciprofloxacin. In terms of biological role, a type II topoisomerase that negatively supercoils closed circular double-stranded DNA in an ATP-dependent manner and also catalyzes the interconversion of other topological isomers of double-stranded DNA rings, including catenanes and knotted rings. Relaxes negatively supercoiled DNA in an ATP-independent manner. A linear reaction intermediate can be trapped in the presence of the antibiotic ciprofloxacin. Negative supercoiling favors strand separation, and DNA replication, transcription, recombination and repair, all of which involve strand separation. Type II topoisomerases break and join 2 DNA strands simultaneously in an ATP-dependent manner. The polypeptide is DNA gyrase subunit B (Mycobacterium bovis (strain BCG / Pasteur 1173P2)).